The following is a 250-amino-acid chain: HLA class II histocompatibility antigen, DO alpha chain (250 aa).

The signal sequence occupies residues 1 to 25 (MALRAGLVLGFHTLMTLLSPQEAGA). An alpha-1 region spans residues 26–110 (TKADHMGSYG…ERSNRSRAIN (85 aa)). Residues 26-217 (TKADHMGSYG…VPIPPPDAME (192 aa)) lie on the Extracellular side of the membrane. N-linked (GlcNAc...) asparagine glycans are attached at residues asparagine 104 and asparagine 144. An alpha-2 region spans residues 111 to 204 (VPPRVTVLPK…GLDAPLLRHW (94 aa)). The Ig-like C1-type domain occupies 113–205 (PRVTVLPKSR…LDAPLLRHWE (93 aa)). Cysteine 133 and cysteine 189 form a disulfide bridge. Residues 205–217 (ELQVPIPPPDAME) are connecting peptide. Residues 218–240 (TLVCALGLAIGLVGFLVGTVLII) form a helical membrane-spanning segment. Residues 241–250 (MGTYVSSVPR) lie on the Cytoplasmic side of the membrane.

This sequence belongs to the MHC class II family. In terms of assembly, heterodimer of an alpha chain (DOA) and a beta chain (DOB). Forms a heterotetrameric complex with an HLA-DM molecule during intracellular transport in endosomal/lysosomal compartments in B-cells.

It localises to the endosome membrane. The protein localises to the lysosome membrane. Important modulator in the HLA class II restricted antigen presentation pathway by interaction with the HLA-DM molecule in B-cells. Modifies peptide exchange activity of HLA-DM. This Homo sapiens (Human) protein is HLA class II histocompatibility antigen, DO alpha chain (HLA-DOA).